We begin with the raw amino-acid sequence, 419 residues long: UDP-N-acetylglucosamine 1-carboxyvinyltransferase (419 aa).

22–23 (KN) is a phosphoenolpyruvate binding site. Arg93 provides a ligand contact to UDP-N-acetyl-alpha-D-glucosamine. Catalysis depends on Cys117, which acts as the Proton donor. Cys117 carries the post-translational modification 2-(S-cysteinyl)pyruvic acid O-phosphothioketal. UDP-N-acetyl-alpha-D-glucosamine contacts are provided by residues 122–126 (RPVDL), Asp308, and Ile330.

This sequence belongs to the EPSP synthase family. MurA subfamily.

The protein localises to the cytoplasm. The enzyme catalyses phosphoenolpyruvate + UDP-N-acetyl-alpha-D-glucosamine = UDP-N-acetyl-3-O-(1-carboxyvinyl)-alpha-D-glucosamine + phosphate. Its pathway is cell wall biogenesis; peptidoglycan biosynthesis. Cell wall formation. Adds enolpyruvyl to UDP-N-acetylglucosamine. In Pseudomonas putida (Arthrobacter siderocapsulatus), this protein is UDP-N-acetylglucosamine 1-carboxyvinyltransferase.